A 519-amino-acid polypeptide reads, in one-letter code: Laccase-2 (519 aa).

A signal peptide spans 1 to 20 (MGLQRFSFFVTLALVARSLA). Plastocyanin-like domains follow at residues 22 to 147 (IGPV…FVVY) and 159 to 301 (VDNE…ILRY). Asn-74 carries an N-linked (GlcNAc...) asparagine glycan. Cu cation-binding residues include His-84, His-86, His-129, and His-131. Disulfide bonds link Cys-105/Cys-508 and Cys-137/Cys-225. Asn-161, Asn-228, Asn-237, Asn-271, Asn-353, and Asn-361 each carry an N-linked (GlcNAc...) asparagine glycan. The Plastocyanin-like 3 domain maps to 368 to 490 (TVPVLLQILS…AGFAIVFAED (123 aa)). Residues His-415, His-418, His-420, His-472, Cys-473, His-474, and His-478 each contribute to the Cu cation site.

Belongs to the multicopper oxidase family. As to quaternary structure, homodimer. It depends on Cu cation as a cofactor.

It localises to the secreted. The enzyme catalyses 4 hydroquinone + O2 = 4 benzosemiquinone + 2 H2O. Functionally, lignin degradation and detoxification of lignin-derived products. The polypeptide is Laccase-2 (Trametes villosa (White-rot fungus)).